A 156-amino-acid chain; its full sequence is 3-dehydroquinate dehydratase 1 (156 aa).

Y32 (proton acceptor) is an active-site residue. Substrate contacts are provided by N84, H90, and D97. The active-site Proton donor is H110. Residues 111-112 (LS) and R121 contribute to the substrate site.

Belongs to the type-II 3-dehydroquinase family. As to quaternary structure, homododecamer.

It carries out the reaction 3-dehydroquinate = 3-dehydroshikimate + H2O. The protein operates within metabolic intermediate biosynthesis; chorismate biosynthesis; chorismate from D-erythrose 4-phosphate and phosphoenolpyruvate: step 3/7. Its function is as follows. Catalyzes a trans-dehydration via an enolate intermediate. This chain is 3-dehydroquinate dehydratase 1 (aroQ1), found in Ralstonia nicotianae (strain ATCC BAA-1114 / GMI1000) (Ralstonia solanacearum).